The chain runs to 132 residues: Small ribosomal subunit protein uS8 (132 aa).

Belongs to the universal ribosomal protein uS8 family. In terms of assembly, part of the 30S ribosomal subunit. Contacts proteins S5 and S12.

In terms of biological role, one of the primary rRNA binding proteins, it binds directly to 16S rRNA central domain where it helps coordinate assembly of the platform of the 30S subunit. In Desulforamulus reducens (strain ATCC BAA-1160 / DSM 100696 / MI-1) (Desulfotomaculum reducens), this protein is Small ribosomal subunit protein uS8.